Consider the following 218-residue polypeptide: Alkylmercury lyase (218 aa).

The protein belongs to the MerB family.

The enzyme catalyses an alkylmercury + H(+) = an alkane + Hg(2+). Its function is as follows. Cleaves the carbon-mercury bond of organomercurials such as phenylmercuric acetate. One product is Hg(2+), which is subsequently detoxified by the mercuric reductase. The polypeptide is Alkylmercury lyase (Clostridium butyricum).